The following is a 624-amino-acid chain: Chaperone protein HtpG (624 aa).

Positions 1 to 336 are a; substrate-binding; sequence MKGQETRGFQ…SNDLPLNVSR (336 aa). A b region spans residues 337–552; the sequence is EILQDSTVTR…ADEMGTQMAK (216 aa). The interval 553–624 is c; sequence LFAAAGQAMP…IKRVNALLLG (72 aa).

Belongs to the heat shock protein 90 family. Homodimer.

Its subcellular location is the cytoplasm. Functionally, molecular chaperone. Has ATPase activity. This is Chaperone protein HtpG from Enterobacter sp. (strain 638).